The primary structure comprises 159 residues: MSDEEHHFESKADAGASKTYPQQAGTIRKGGHIVIKNRPCKVVEVSTSKTGKHGHAKCHFVAIDIFTGKKLEDIVPSSHNCDVPHVNRTDYQLIDISEDGFVSLLTENGNTKDDLRLPTDDTLLAQVKDGFAEGKDLVLSVMSAMGEEQICGIKDIGPK.

Over residues Met-1–Ala-12 the composition is skewed to basic and acidic residues. Positions Met-1–Gln-23 are disordered. At Lys-52 the chain carries Hypusine.

Belongs to the eIF-5A family. Lys-52 undergoes hypusination, a unique post-translational modification that consists in the addition of a butylamino group from spermidine to lysine side chain, leading to the formation of the unusual amino acid hypusine. eIF-5As are the only known proteins to undergo this modification, which is essential for their function.

In terms of biological role, translation factor that promotes translation elongation and termination, particularly upon ribosome stalling at specific amino acid sequence contexts. Binds between the exit (E) and peptidyl (P) site of the ribosome and promotes rescue of stalled ribosome: specifically required for efficient translation of polyproline-containing peptides as well as other motifs that stall the ribosome. Acts as a ribosome quality control (RQC) cofactor by joining the RQC complex to facilitate peptidyl transfer during CAT tailing step. The chain is Eukaryotic translation initiation factor 5A-1 from Solanum lycopersicum (Tomato).